We begin with the raw amino-acid sequence, 367 residues long: Chorismate synthase (367 aa).

Position 48 (Arg48) interacts with NADP(+). Residues 125-127 (RSS), Gly283, 298-302 (KPTPS), and Arg324 contribute to the FMN site.

It belongs to the chorismate synthase family. Homotetramer. FMNH2 is required as a cofactor.

The catalysed reaction is 5-O-(1-carboxyvinyl)-3-phosphoshikimate = chorismate + phosphate. The protein operates within metabolic intermediate biosynthesis; chorismate biosynthesis; chorismate from D-erythrose 4-phosphate and phosphoenolpyruvate: step 7/7. In terms of biological role, catalyzes the anti-1,4-elimination of the C-3 phosphate and the C-6 proR hydrogen from 5-enolpyruvylshikimate-3-phosphate (EPSP) to yield chorismate, which is the branch point compound that serves as the starting substrate for the three terminal pathways of aromatic amino acid biosynthesis. This reaction introduces a second double bond into the aromatic ring system. The polypeptide is Chorismate synthase (Agathobacter rectalis (strain ATCC 33656 / DSM 3377 / JCM 17463 / KCTC 5835 / VPI 0990) (Eubacterium rectale)).